The sequence spans 151 residues: Transcriptional repressor NrdR (151 aa).

The segment at 3 to 34 (CPYCAYGESKVVDSRSTEDGSSIRRRRECLKC) is a zinc-finger region. The 91-residue stretch at 49–139 (ILVIKKNMSR…VYRQFKDINT (91 aa)) folds into the ATP-cone domain.

The protein belongs to the NrdR family. It depends on Zn(2+) as a cofactor.

Negatively regulates transcription of bacterial ribonucleotide reductase nrd genes and operons by binding to NrdR-boxes. In Clostridium botulinum (strain 657 / Type Ba4), this protein is Transcriptional repressor NrdR.